We begin with the raw amino-acid sequence, 355 residues long: DNA-binding protein RHL1 (355 aa).

Disordered stretches follow at residues 1 to 26, 181 to 215, and 229 to 355; these read MVRA…KQRK, DFQG…VDNE, and IQVT…SSKA. Positions 14–23 are enriched in basic and acidic residues; it reads GGDKDDAESK. Composition is skewed to low complexity over residues 230 to 246 and 260 to 274; these read QVTP…VTPV and AETS…SEGN. Composition is skewed to basic and acidic residues over residues 281 to 296 and 309 to 326; these read KPLL…REES and LPEE…KDSK. Residues 344–355 show a composition bias toward low complexity; that stretch reads AGTSKAKSSSKA.

As to quaternary structure, interacts with BIN4 and TOP6A, but not with TOP6B. Expressed inproliferating and endoreduplicating cells.

Its subcellular location is the nucleus. In terms of biological role, component of the DNA topoisomerase VI complex involved in chromatin organization and progression of endoreduplication cycles. Binds to DNA. Required for endoreduplication beyond 8C. In Arabidopsis thaliana (Mouse-ear cress), this protein is DNA-binding protein RHL1 (RHL1).